Here is a 444-residue protein sequence, read N- to C-terminus: Transcription activator AKTR-1 (444 aa).

The zn(2)-C6 fungal-type DNA-binding region spans 16 to 43 (CDFCTQSKLRCNKNKPSCRRCTIQQQPC). Positions 49–87 (RRTGRPPKHPRKANDCQEANGQHGEQDPVTSTPGGSCQQ) are disordered. A compositionally biased stretch (basic residues) spans 50–59 (RTGRPPKHPR). Residues 76–87 (PVTSTPGGSCQQ) are compositionally biased toward polar residues.

It is found in the nucleus. Transcription factor that regulates the expression of the gene clusters that mediate the biosynthesis of the host-selective toxins (HSTs) AK-toxins responsible for Japanese pear black spot disease by the Japanese pear pathotype. AK-toxins are esters of 9,10-epoxy 8-hydroxy 9-methyldecatrienoic acid (EDA). On cellular level, AK-toxins affect plasma membrane of susceptible cells and cause a sudden increase in loss of K(+) after a few minutes of toxin treatment. The chain is Transcription activator AKTR-1 from Alternaria alternata (Alternaria rot fungus).